A 332-amino-acid chain; its full sequence is Glycerol-3-phosphate dehydrogenase [NAD(P)+] (332 aa).

The NADPH site is built by Trp-11, Arg-30, and Lys-108. Lys-108, Gly-137, and Ser-139 together coordinate sn-glycerol 3-phosphate. Residue Ala-141 participates in NADPH binding. Positions 192, 245, 255, 256, and 257 each coordinate sn-glycerol 3-phosphate. Lys-192 serves as the catalytic Proton acceptor. Arg-256 is an NADPH binding site. The NADPH site is built by Val-280 and Glu-282.

The protein belongs to the NAD-dependent glycerol-3-phosphate dehydrogenase family.

The protein resides in the cytoplasm. It carries out the reaction sn-glycerol 3-phosphate + NAD(+) = dihydroxyacetone phosphate + NADH + H(+). The enzyme catalyses sn-glycerol 3-phosphate + NADP(+) = dihydroxyacetone phosphate + NADPH + H(+). It functions in the pathway membrane lipid metabolism; glycerophospholipid metabolism. Catalyzes the reduction of the glycolytic intermediate dihydroxyacetone phosphate (DHAP) to sn-glycerol 3-phosphate (G3P), the key precursor for phospholipid synthesis. The protein is Glycerol-3-phosphate dehydrogenase [NAD(P)+] of Burkholderia ambifaria (strain MC40-6).